A 263-amino-acid polypeptide reads, in one-letter code: Methylesterase 3 (263 aa).

The active-site Acyl-ester intermediate is the Ser85. Catalysis depends on charge relay system residues Asp213 and His241.

The protein belongs to the AB hydrolase superfamily. Methylesterase family.

It catalyses the reaction methyl (indol-3-yl)acetate + H2O = (indol-3-yl)acetate + methanol + H(+). The enzyme catalyses methyl (-)-jasmonate + H2O = jasmonate + methanol + H(+). The protein operates within plant hormone biosynthesis. Its pathway is lipid metabolism; oxylipin biosynthesis. Functionally, methylesterase shown to have carboxylesterase activity, methyl indole-3-acetic acid (MeIAA) esterase activity and methyl jasmonate (MeJA) esterase activity in vitro. In Arabidopsis thaliana (Mouse-ear cress), this protein is Methylesterase 3.